Here is an 854-residue protein sequence, read N- to C-terminus: DNA mismatch repair protein MutS (854 aa).

616–623 serves as a coordination point for ATP; the sequence is GPNMGGKS.

This sequence belongs to the DNA mismatch repair MutS family.

Functionally, this protein is involved in the repair of mismatches in DNA. It is possible that it carries out the mismatch recognition step. This protein has a weak ATPase activity. The chain is DNA mismatch repair protein MutS from Pectobacterium atrosepticum (strain SCRI 1043 / ATCC BAA-672) (Erwinia carotovora subsp. atroseptica).